The sequence spans 744 residues: Catalase-peroxidase (744 aa).

A signal peptide spans 1 to 22 (MSPRARRCTDRCARMSERSMNA). Residues 114-234 (WHSAGTYRLA…LGATEMGLIY (121 aa)) constitute a cross-link (tryptophyl-tyrosyl-methioninium (Trp-Tyr) (with M-260)). His115 acts as the Proton acceptor in catalysis. The tryptophyl-tyrosyl-methioninium (Tyr-Met) (with W-114) cross-link spans 234 to 260 (YVNPEGPDRNGDPISAAKFIRETFARM). Residue His275 participates in heme b binding.

It belongs to the peroxidase family. Peroxidase/catalase subfamily. As to quaternary structure, homodimer or homotetramer. Heme b is required as a cofactor. In terms of processing, formation of the three residue Trp-Tyr-Met cross-link is important for the catalase, but not the peroxidase activity of the enzyme.

It catalyses the reaction H2O2 + AH2 = A + 2 H2O. It carries out the reaction 2 H2O2 = O2 + 2 H2O. Its function is as follows. Bifunctional enzyme with both catalase and broad-spectrum peroxidase activity. This is Catalase-peroxidase from Azorhizobium caulinodans (strain ATCC 43989 / DSM 5975 / JCM 20966 / LMG 6465 / NBRC 14845 / NCIMB 13405 / ORS 571).